The sequence spans 125 residues: Small ribosomal subunit protein eS8 (125 aa).

Belongs to the eukaryotic ribosomal protein eS8 family. Part of the 30S ribosomal subunit.

In Methanocorpusculum labreanum (strain ATCC 43576 / DSM 4855 / Z), this protein is Small ribosomal subunit protein eS8.